We begin with the raw amino-acid sequence, 342 residues long: Anthranilate phosphoribosyltransferase (342 aa).

Residues G90, 93–94, T98, 100–103, 118–126, and A130 contribute to the 5-phospho-alpha-D-ribose 1-diphosphate site; these read GD, NIST, and KHGNRSVSS. G90 contributes to the anthranilate binding site. Residue S102 coordinates Mg(2+). Position 121 (N121) interacts with anthranilate. R176 serves as a coordination point for anthranilate. Mg(2+) contacts are provided by D234 and E235.

Belongs to the anthranilate phosphoribosyltransferase family. As to quaternary structure, homodimer. The cofactor is Mg(2+).

It catalyses the reaction N-(5-phospho-beta-D-ribosyl)anthranilate + diphosphate = 5-phospho-alpha-D-ribose 1-diphosphate + anthranilate. Its pathway is amino-acid biosynthesis; L-tryptophan biosynthesis; L-tryptophan from chorismate: step 2/5. Its function is as follows. Catalyzes the transfer of the phosphoribosyl group of 5-phosphorylribose-1-pyrophosphate (PRPP) to anthranilate to yield N-(5'-phosphoribosyl)-anthranilate (PRA). This is Anthranilate phosphoribosyltransferase from Mannheimia succiniciproducens (strain KCTC 0769BP / MBEL55E).